Here is a 409-residue protein sequence, read N- to C-terminus: Menaquinone reductase (409 aa).

Residues 11–15 (GAGPA), 44–47 (CGDG), Arg101, Val125, Asp288, and 300–301 (GI) contribute to the FAD site.

Belongs to the geranylgeranyl reductase family. FAD serves as cofactor.

The catalysed reaction is menaquinone-9 + AH2 = beta-dihydromenaquinone-9 + A. Its pathway is quinol/quinone metabolism; menaquinone biosynthesis. Its function is as follows. Catalyzes the reduction of a single double bond in the isoprenoid tail of menaquinone (MK-9) in M.smegmatis, likely the beta-isoprene unit, forming the predominant form of menaquinone found in mycobacteria, MK-9(II-H2). In Mycolicibacterium smegmatis (strain ATCC 700084 / mc(2)155) (Mycobacterium smegmatis), this protein is Menaquinone reductase.